Reading from the N-terminus, the 283-residue chain is Thymidylate synthase (283 aa).

Residue R22 coordinates dUMP. The Nucleophile role is filled by C160. DUMP contacts are provided by residues 180-183, N191, and 221-223; these read RSCD and HIY. A (6R)-5,10-methylene-5,6,7,8-tetrahydrofolate-binding site is contributed by D183. (6R)-5,10-methylene-5,6,7,8-tetrahydrofolate is bound at residue S282.

Belongs to the thymidylate synthase family. Bacterial-type ThyA subfamily. Homodimer.

It is found in the cytoplasm. The catalysed reaction is dUMP + (6R)-5,10-methylene-5,6,7,8-tetrahydrofolate = 7,8-dihydrofolate + dTMP. It participates in pyrimidine metabolism; dTTP biosynthesis. Functionally, catalyzes the reductive methylation of 2'-deoxyuridine-5'-monophosphate (dUMP) to 2'-deoxythymidine-5'-monophosphate (dTMP) while utilizing 5,10-methylenetetrahydrofolate (mTHF) as the methyl donor and reductant in the reaction, yielding dihydrofolate (DHF) as a by-product. This enzymatic reaction provides an intracellular de novo source of dTMP, an essential precursor for DNA biosynthesis. The polypeptide is Thymidylate synthase (Aliivibrio fischeri (strain ATCC 700601 / ES114) (Vibrio fischeri)).